The chain runs to 454 residues: tRNA modification GTPase MnmE (454 aa).

(6S)-5-formyl-5,6,7,8-tetrahydrofolate-binding residues include arginine 23, glutamate 80, and lysine 120. The TrmE-type G domain occupies 216–377 (GMKVVIAGRP…LRNHLKQSMG (162 aa)). Asparagine 226 provides a ligand contact to K(+). GTP contacts are provided by residues 226-231 (NAGKSS), 245-251 (TDIAGTT), 270-273 (DTAG), 335-338 (NKAD), and 358-360 (SAR). A Mg(2+)-binding site is contributed by serine 230. Residues threonine 245, isoleucine 247, and threonine 250 each coordinate K(+). Threonine 251 provides a ligand contact to Mg(2+). Lysine 454 contacts (6S)-5-formyl-5,6,7,8-tetrahydrofolate.

This sequence belongs to the TRAFAC class TrmE-Era-EngA-EngB-Septin-like GTPase superfamily. TrmE GTPase family. As to quaternary structure, homodimer. Heterotetramer of two MnmE and two MnmG subunits. It depends on K(+) as a cofactor.

It is found in the cytoplasm. Functionally, exhibits a very high intrinsic GTPase hydrolysis rate. Involved in the addition of a carboxymethylaminomethyl (cmnm) group at the wobble position (U34) of certain tRNAs, forming tRNA-cmnm(5)s(2)U34. In Escherichia coli O6:K15:H31 (strain 536 / UPEC), this protein is tRNA modification GTPase MnmE.